The chain runs to 257 residues: Na(+)-translocating NADH-quinone reductase subunit C (257 aa).

A helical transmembrane segment spans residues 13-33 (LTVVVLLSLICSLIVASAAVL). Position 224 is an FMN phosphoryl threonine (T224).

It belongs to the NqrC family. Composed of six subunits; NqrA, NqrB, NqrC, NqrD, NqrE and NqrF. It depends on FMN as a cofactor.

Its subcellular location is the cell inner membrane. It catalyses the reaction a ubiquinone + n Na(+)(in) + NADH + H(+) = a ubiquinol + n Na(+)(out) + NAD(+). NQR complex catalyzes the reduction of ubiquinone-1 to ubiquinol by two successive reactions, coupled with the transport of Na(+) ions from the cytoplasm to the periplasm. NqrA to NqrE are probably involved in the second step, the conversion of ubisemiquinone to ubiquinol. This is Na(+)-translocating NADH-quinone reductase subunit C from Haemophilus ducreyi (strain 35000HP / ATCC 700724).